We begin with the raw amino-acid sequence, 331 residues long: Polysaccharide lyase (331 aa).

Positions 1 to 22 (MSLPLRLALLPTLLASASAFAA) are cleaved as a signal peptide. C23 is lipidated: N-palmitoyl cysteine. C23 is lipidated: S-diacylglycerol cysteine.

It belongs to the polysaccharide lyase 5 family.

It localises to the cell outer membrane. It carries out the reaction Eliminative cleavage of alginate to give oligosaccharides with 4-deoxy-alpha-L-erythro-hex-4-enuronosyl groups at their non-reducing ends and beta-D-mannuronate at their reducing end.. The enzyme catalyses [hyaluronan](n) = n 3-(4-deoxy-beta-D-gluc-4-enuronosyl)-N-acetyl-D-glucosamine + H2O. It catalyses the reaction Eliminative cleavage of (1-&gt;4)-beta-D-glucuronans to give oligosaccharides with 4-deoxy-beta-D-gluc-4-enuronosyl groups at their non-reducing ends. Complete degradation of glucuronans results in the formation of tetrasaccharides.. With respect to regulation, is inhibited by mono- and divalent cations as well as L-ascorbic acid 6-hexadecanoate. Polysaccharide lyase that catalyzes the depolymerization of several anionic polysaccharides via a beta-elimination mechanism. Exhibits broad substrate specificity, catalyzing the degradation of not only alginate and poly-beta-D-mannuronate (poly-ManA), but poly-beta-D-glucuronate (poly-GlcA or poly-GlcUA) and hyaluronate (HA) as well. The oligosaccharide products formed by enzymatic cleavage are comprised mainly of disaccharides, with a lower abundance of trimers and pentamers. Is not active on poly-D-galacturonate, heparin and heparin sulfate. This Stenotrophomonas maltophilia (strain K279a) protein is Polysaccharide lyase.